The primary structure comprises 194 residues: 7-methyl-GTP pyrophosphatase (194 aa).

Aspartate 69 serves as the catalytic Proton acceptor.

Belongs to the Maf family. YceF subfamily. Requires a divalent metal cation as cofactor.

Its subcellular location is the cytoplasm. It catalyses the reaction N(7)-methyl-GTP + H2O = N(7)-methyl-GMP + diphosphate + H(+). Nucleoside triphosphate pyrophosphatase that hydrolyzes 7-methyl-GTP (m(7)GTP). May have a dual role in cell division arrest and in preventing the incorporation of modified nucleotides into cellular nucleic acids. The polypeptide is 7-methyl-GTP pyrophosphatase (yceF) (Shigella flexneri).